The following is a 131-amino-acid chain: Small ribosomal subunit protein uS8 (131 aa).

It belongs to the universal ribosomal protein uS8 family. In terms of assembly, part of the 30S ribosomal subunit. Contacts proteins S5 and S12.

One of the primary rRNA binding proteins, it binds directly to 16S rRNA central domain where it helps coordinate assembly of the platform of the 30S subunit. In Parabacteroides distasonis (strain ATCC 8503 / DSM 20701 / CIP 104284 / JCM 5825 / NCTC 11152), this protein is Small ribosomal subunit protein uS8.